A 634-amino-acid chain; its full sequence is Ras and EF-hand domain-containing protein homolog (634 aa).

EF-hand domains are found at residues Asp-5–Leu-33 and Leu-33–His-68. Asp-46, Asp-48, Ser-50, Lys-52, and Glu-57 together coordinate Ca(2+). Positions Leu-169–Glu-310 form a coiled coil. Disordered stretches follow at residues Glu-216 to Glu-237 and Gln-308 to Val-328. GTP is bound by residues Ala-449–Ser-454, Asn-552–Asp-555, and Ala-585–Leu-586. The propeptide at Arg-632 to Ser-634 is removed in mature form.

This sequence belongs to the small GTPase superfamily. Rab family. Homodimer.

It is found in the cytoplasm. The protein localises to the perinuclear region. Binds GTP and GDP. Plays a role in uterine seam cell development. The polypeptide is Ras and EF-hand domain-containing protein homolog (Caenorhabditis briggsae).